Consider the following 669-residue polypeptide: UvrABC system protein C (669 aa).

The region spanning 14–91 (DSPGCYLHKD…IQRYKPKYNI (78 aa)) is the GIY-YIG domain. A UVR domain is found at 196–231 (KKIVKELEGKMISASDNMEFEQAAEYRDVIKAIGTL). The tract at residues 647–669 (PHKSDENWESIKDNVPLLKSEKS) is disordered. Positions 648-658 (HKSDENWESIK) are enriched in basic and acidic residues.

The protein belongs to the UvrC family. As to quaternary structure, interacts with UvrB in an incision complex.

The protein localises to the cytoplasm. In terms of biological role, the UvrABC repair system catalyzes the recognition and processing of DNA lesions. UvrC both incises the 5' and 3' sides of the lesion. The N-terminal half is responsible for the 3' incision and the C-terminal half is responsible for the 5' incision. The sequence is that of UvrABC system protein C from Lactococcus lactis subsp. cremoris (strain MG1363).